Consider the following 455-residue polypeptide: Glutamyl-tRNA reductase (455 aa).

Substrate-binding positions include T49–R52, S109, E114–Q116, and Q120. The active-site Nucleophile is the C50. Residue G189–G194 participates in NADP(+) binding.

It belongs to the glutamyl-tRNA reductase family. As to quaternary structure, homodimer.

The catalysed reaction is (S)-4-amino-5-oxopentanoate + tRNA(Glu) + NADP(+) = L-glutamyl-tRNA(Glu) + NADPH + H(+). The protein operates within porphyrin-containing compound metabolism; protoporphyrin-IX biosynthesis; 5-aminolevulinate from L-glutamyl-tRNA(Glu): step 1/2. Catalyzes the NADPH-dependent reduction of glutamyl-tRNA(Glu) to glutamate 1-semialdehyde (GSA). This chain is Glutamyl-tRNA reductase, found in Bacillus pumilus (strain SAFR-032).